Here is a 574-residue protein sequence, read N- to C-terminus: Sulfite reductase [NADPH] hemoprotein beta-component (574 aa).

[4Fe-4S] cluster-binding residues include Cys-439, Cys-445, Cys-484, and Cys-488. A siroheme-binding site is contributed by Cys-488.

Belongs to the nitrite and sulfite reductase 4Fe-4S domain family. In terms of assembly, alpha(8)-beta(8). The alpha component is a flavoprotein, the beta component is a hemoprotein. The cofactor is siroheme. Requires [4Fe-4S] cluster as cofactor.

It carries out the reaction hydrogen sulfide + 3 NADP(+) + 3 H2O = sulfite + 3 NADPH + 4 H(+). It functions in the pathway sulfur metabolism; hydrogen sulfide biosynthesis; hydrogen sulfide from sulfite (NADPH route): step 1/1. Functionally, component of the sulfite reductase complex that catalyzes the 6-electron reduction of sulfite to sulfide. This is one of several activities required for the biosynthesis of L-cysteine from sulfate. In Paenibacillus sp. (strain JDR-2), this protein is Sulfite reductase [NADPH] hemoprotein beta-component.